Reading from the N-terminus, the 469-residue chain is SWI/SNF complex subunit SWI3B (469 aa).

Residues 1 to 42 (MAMKAPDPGGSGEILPSTPSLSETTSGGAAAASKSAQLPSSS) form a disordered region. Low complexity predominate over residues 15-42 (LPSTPSLSETTSGGAAAASKSAQLPSSS). One can recognise an SWIRM domain in the interval 48–145 (IHVPSYSSWF…YNSSASAKPL (98 aa)). One can recognise an SANT domain in the interval 223–274 (ESKPEWSDKEILLLLEAVMHYGDDWKKVASHVIGRTEKDCVSQFVKLPFGEQ). Basic and acidic residues-rich tracts occupy residues 293-306 (DSDI…DKDG) and 360-369 (DKNASRDPNR). Disordered regions lie at residues 293 to 314 (DSDI…KRIK) and 360 to 387 (DKNA…ESER). The span at 370–380 (QDANAASSGET) shows a compositional bias: polar residues. Residues 423-447 (VHFEKLDLEMERSRKQLEEVRNLLF) are a coiled coil.

Homodimers and heterodimers. Interacts with SWI3A, SWI3C, SWI3D, BSH, BRM and FCA (via C-terminus), and (via N-terminus) with HAB1. Interacts with MORC6 and SUVH9. As to expression, expressed in roots, stems, leaves, flowers and siliques.

Its subcellular location is the nucleus. Component of a multiprotein complex equivalent of the SWI/SNF complex, an ATP-dependent chromatin-remodeling complex, which is required for the positive and negative regulation of gene expression of a large number of genes. It changes chromatin structure by altering DNA-histone contacts within a nucleosome, leading eventually to a change in nucleosome position, thus facilitating or repressing binding of gene-specific transcription factors. May play an essential role in the transition from the vegetative to the reproductive phase of development. May be a positive regulator of ABA signaling. The chain is SWI/SNF complex subunit SWI3B (SWI3B) from Arabidopsis thaliana (Mouse-ear cress).